Reading from the N-terminus, the 335-residue chain is Glycerol-3-phosphate dehydrogenase [NAD(P)+] (335 aa).

Residues Ser10, Phe11, Arg31, and Lys105 each contribute to the NADPH site. Sn-glycerol 3-phosphate-binding residues include Lys105, Gly136, and Ser138. NADPH is bound at residue Ala140. Sn-glycerol 3-phosphate is bound by residues Lys191, Asp244, Ser254, Arg255, and Asn256. Residue Lys191 is the Proton acceptor of the active site. Arg255 is a binding site for NADPH. NADPH-binding residues include Val279 and Glu281.

This sequence belongs to the NAD-dependent glycerol-3-phosphate dehydrogenase family.

It is found in the cytoplasm. It catalyses the reaction sn-glycerol 3-phosphate + NAD(+) = dihydroxyacetone phosphate + NADH + H(+). It carries out the reaction sn-glycerol 3-phosphate + NADP(+) = dihydroxyacetone phosphate + NADPH + H(+). Its pathway is membrane lipid metabolism; glycerophospholipid metabolism. Catalyzes the reduction of the glycolytic intermediate dihydroxyacetone phosphate (DHAP) to sn-glycerol 3-phosphate (G3P), the key precursor for phospholipid synthesis. This is Glycerol-3-phosphate dehydrogenase [NAD(P)+] from Leptospira interrogans serogroup Icterohaemorrhagiae serovar Lai (strain 56601).